The primary structure comprises 144 residues: Large ribosomal subunit protein uL15 (144 aa).

A disordered region spans residues 1-51 (MKLNELKPATGSRSKRLRKGRGLSSGHGFTSGRGTKGQKAHGKTRLGFEGG). Positions 23-35 (LSSGHGFTSGRGT) are enriched in gly residues.

It belongs to the universal ribosomal protein uL15 family. In terms of assembly, part of the 50S ribosomal subunit.

In terms of biological role, binds to the 23S rRNA. The sequence is that of Large ribosomal subunit protein uL15 from Limosilactobacillus reuteri (strain DSM 20016) (Lactobacillus reuteri).